The sequence spans 267 residues: Ribonuclease HII (267 aa).

The 189-residue stretch at 57 to 245 (WPVAGCDEVG…VVAARERHRA (189 aa)) folds into the RNase H type-2 domain. Residues D63, E64, and D154 each contribute to the a divalent metal cation site.

The protein belongs to the RNase HII family. Mn(2+) serves as cofactor. Mg(2+) is required as a cofactor.

The protein localises to the cytoplasm. It catalyses the reaction Endonucleolytic cleavage to 5'-phosphomonoester.. Functionally, endonuclease that specifically degrades the RNA of RNA-DNA hybrids. The chain is Ribonuclease HII from Nitrobacter hamburgensis (strain DSM 10229 / NCIMB 13809 / X14).